A 689-amino-acid polypeptide reads, in one-letter code: tRNA 5-methylaminomethyl-2-thiouridine biosynthesis bifunctional protein MnmC (689 aa).

The tRNA (mnm(5)s(2)U34)-methyltransferase stretch occupies residues 1–245 (MNQRPIQTAT…KREMLTGTLP (245 aa)). Positions 270-689 (IGGGIVSALT…RSPATQESSR (420 aa)) are FAD-dependent cmnm(5)s(2)U34 oxidoreductase.

This sequence in the N-terminal section; belongs to the methyltransferase superfamily. tRNA (mnm(5)s(2)U34)-methyltransferase family. The protein in the C-terminal section; belongs to the DAO family. The cofactor is FAD.

Its subcellular location is the cytoplasm. The catalysed reaction is 5-aminomethyl-2-thiouridine(34) in tRNA + S-adenosyl-L-methionine = 5-methylaminomethyl-2-thiouridine(34) in tRNA + S-adenosyl-L-homocysteine + H(+). Functionally, catalyzes the last two steps in the biosynthesis of 5-methylaminomethyl-2-thiouridine (mnm(5)s(2)U) at the wobble position (U34) in tRNA. Catalyzes the FAD-dependent demodification of cmnm(5)s(2)U34 to nm(5)s(2)U34, followed by the transfer of a methyl group from S-adenosyl-L-methionine to nm(5)s(2)U34, to form mnm(5)s(2)U34. This is tRNA 5-methylaminomethyl-2-thiouridine biosynthesis bifunctional protein MnmC from Yersinia pseudotuberculosis serotype O:1b (strain IP 31758).